The primary structure comprises 647 residues: DNA mismatch repair protein MutL (647 aa).

Belongs to the DNA mismatch repair MutL/HexB family.

Functionally, this protein is involved in the repair of mismatches in DNA. It is required for dam-dependent methyl-directed DNA mismatch repair. May act as a 'molecular matchmaker', a protein that promotes the formation of a stable complex between two or more DNA-binding proteins in an ATP-dependent manner without itself being part of a final effector complex. This chain is DNA mismatch repair protein MutL, found in Bacillus thuringiensis (strain Al Hakam).